The sequence spans 99 residues: UPF0235 protein Neut_2146 (99 aa).

Belongs to the UPF0235 family.

In Nitrosomonas eutropha (strain DSM 101675 / C91 / Nm57), this protein is UPF0235 protein Neut_2146.